The sequence spans 381 residues: 3-hydroxyisobutyryl-CoA hydrolase, mitochondrial (381 aa).

Residues 1–25 (MDRLLTISNHIGKNIRQFSTSTEEV) constitute a mitochondrion transit peptide. 4 residues coordinate substrate: Glu-116, Gly-141, Glu-164, and Asp-172.

This sequence belongs to the enoyl-CoA hydratase/isomerase family.

It is found in the mitochondrion. The catalysed reaction is 3-hydroxy-2-methylpropanoyl-CoA + H2O = 3-hydroxy-2-methylpropanoate + CoA + H(+). It participates in amino-acid degradation; L-valine degradation. In terms of biological role, hydrolyzes 3-hydroxyisobutyryl-CoA (HIBYL-CoA), a saline catabolite. The polypeptide is 3-hydroxyisobutyryl-CoA hydrolase, mitochondrial (hibch) (Dictyostelium discoideum (Social amoeba)).